A 610-amino-acid chain; its full sequence is Probable galacturonosyltransferase 5 (610 aa).

Over 1–6 (MNQVRR) the chain is Cytoplasmic. Residues 7–27 (WQRILILSLLLLSVLAPIVFV) traverse the membrane as a helical; Signal-anchor for type II membrane protein segment. The Lumenal segment spans residues 28–610 (SNRLKSITSV…PHLQRCNIHD (583 aa)). The segment covering 86 to 101 (LSNSSDKSNDTVQSNE) has biased composition (polar residues). The tract at residues 86–170 (LSNSSDKSND…KNTRVQLERA (85 aa)) is disordered. N-linked (GlcNAc...) asparagine glycosylation is found at Asn88 and Asn94. Basic and acidic residues predominate over residues 110-123 (EVDKGNNHKPKEEQ). The span at 124-135 (AVSQKTTVSSNA) shows a compositional bias: polar residues. Over residues 139–170 (ISARDIQLNHKTEFRPPSSKSEKNTRVQLERA) the composition is skewed to basic and acidic residues. Asn196, Asn338, Asn401, and Asn475 each carry an N-linked (GlcNAc...) asparagine glycan.

Belongs to the glycosyltransferase 8 family. In terms of tissue distribution, expressed in roots, inflorescences, siliques, leaves and stems.

The protein resides in the golgi apparatus membrane. It functions in the pathway glycan metabolism; pectin biosynthesis. Functionally, may be involved in pectin and/or xylans biosynthesis in cell walls. The sequence is that of Probable galacturonosyltransferase 5 (GAUT5) from Arabidopsis thaliana (Mouse-ear cress).